A 323-amino-acid polypeptide reads, in one-letter code: Aldo-keto reductase family 1 member C23-like protein (323 aa).

20–24 lines the NADP(+) pocket; that stretch reads GFGTY. Lys-31 contributes to the substrate binding site. Residue Asp-50 participates in NADP(+) binding. Tyr-55 acts as the Proton donor in catalysis. Position 117 (His-117) interacts with substrate. Residues 166-167, Gln-190, 216-222, and 270-280 contribute to the NADP(+) site; these read SN, YGALGTQ, and KSYNEKRIKEN.

This sequence belongs to the aldo/keto reductase family. In terms of assembly, monomer. Detected in endometrium surface epithelium (at protein level). Detected in endometrium.

It localises to the cytoplasm. In terms of biological role, NADP-dependent oxidoreductase involved in steroid metabolism. May act on various hydroxysteroids. The chain is Aldo-keto reductase family 1 member C23-like protein (PGFS) from Equus caballus (Horse).